A 564-amino-acid polypeptide reads, in one-letter code: Protein glycosylation K (564 aa).

At 1–15 (MLKKLFFILSKEDKN) the chain is on the cytoplasmic side. A helical transmembrane segment spans residues 16–38 (FLFFLLVFSVFISFIETFAISLV). The ABC transmembrane type-1 domain maps to 17 to 319 (LFFLLVFSVF…IITSYHDLLY (303 aa)). The Extracellular segment spans residues 39–76 (MPFITLASDFSYFDRNKYLISLKEYLNIPVFEIIVYFG). Residues 46–67 (SDFSYFDRNKYLISLKEYLNIP) are important for stimulation of ATPase activity by lipid-linked oligosaccharides and subsequent translocation of lipid-linked oligosaccharides. A helical membrane pass occupies residues 77-98 (VGLIVFYVFRALLNAYYFHLLA). The Cytoplasmic portion of the chain corresponds to 99–149 (RFSKGRYHAIAYKVFSKFLNINYEKFTQKNQSEILKSITGEVYNLSTMISS). Residues 150-170 (FLLLMSEIFVVLLLYALMLLI) form a helical membrane-spanning segment. Residues 171 to 173 (NYK) lie on the Extracellular side of the membrane. The helical transmembrane segment at 174–197 (ITLFLSIFMVLNAFILVKILSPII) threads the bilayer. The Cytoplasmic segment spans residues 198 to 254 (KKAGVRREEAMKNFFEILNTNLNNFKFIKLKTKEDGVLSLFKAQSEAFSKANITNES). Residues 255–276 (VAAVPRIYLEGIGFCVLVFIVV) traverse the membrane as a helical segment. The Extracellular segment spans residues 277 to 292 (FLVLKNESDISGILST). The chain crosses the membrane as a helical span at residues 293–314 (ISIFVLALYRLMPSANRIITSY). Over 315-564 (HDLLYYHSSL…LEHGKLKEEK (250 aa)) the chain is Cytoplasmic. The 216-residue stretch at 349-564 (LKICNLSFGY…LEHGKLKEEK (216 aa)) folds into the ABC transporter domain. 382 to 389 (GESGCGKS) is a binding site for ATP.

The protein belongs to the ABC transporter superfamily. In terms of assembly, homodimer; domain-swapped. Helices that arise in transmembrane regions 4 and 5 from one subunit cross over and contact the nucleotide-binding domain from the other subunit.

It localises to the cell inner membrane. It carries out the reaction ATP + H2O + lipopolysaccharideSide 1 = ADP + phosphate + lipopolysaccharideSide 2.. Its pathway is protein modification; protein glycosylation. Its function is as follows. Mediates the ATP-dependent translocation of the undecaprenylpyrophosphate-linked heptasaccharide intermediate across the cell membrane; this is an essential step during the N-linked protein glycosylation pathway. Transport across the membrane is effected via ATP-driven conformation changes. Most likely, only the polar and charged part of the glycolipid enter the substrate-binding cavity, and the lipid tail remains exposed to the membrane lipids during the transmembrane flipping process. The protein is Protein glycosylation K (pglK) of Campylobacter jejuni subsp. jejuni serotype O:2 (strain ATCC 700819 / NCTC 11168).